An 824-amino-acid polypeptide reads, in one-letter code: Type IV secretion system protein PtlC homolog (824 aa).

Position 456-463 (456-463 (GQSGSGKT)) interacts with ATP.

This sequence belongs to the TrbE/VirB4 family.

Its subcellular location is the cell membrane. This Bordetella bronchiseptica (strain ATCC BAA-588 / NCTC 13252 / RB50) (Alcaligenes bronchisepticus) protein is Type IV secretion system protein PtlC homolog (ptlC).